Here is a 92-residue protein sequence, read N- to C-terminus: Small nuclear ribonucleoprotein E (92 aa).

The Sm domain maps to 18–92 (INLIFRYLQN…NITLLQSVSN (75 aa)).

It belongs to the snRNP Sm proteins family. Core component of the spliceosomal U1, U2, U4 and U5 small nuclear ribonucleoproteins (snRNPs), the building blocks of the spliceosome. Most spliceosomal snRNPs contain a common set of Sm proteins, SNRPB, SNRPD1, SNRPD2, SNRPD3, SNRPE, SNRPF and SNRPG that assemble in a heptameric protein ring on the Sm site of the small nuclear RNA to form the core snRNP. Component of the U1 snRNP. The U1 snRNP is composed of the U1 snRNA and the 7 core Sm proteins SNRPB, SNRPD1, SNRPD2, SNRPD3, SNRPE, SNRPF and SNRPG, and at least three U1 snRNP-specific proteins SNRNP70/U1-70K, SNRPA/U1-A and SNRPC/U1-C. Component of the U4/U6-U5 tri-snRNP complex composed of the U4, U6 and U5 snRNAs and at least PRPF3, PRPF4, PRPF6, PRPF8, PRPF31, SNRNP200, TXNL4A, SNRNP40, SNRPB, SNRPD1, SNRPD2, SNRPD3, SNRPE, SNRPF, SNRPG, DDX23, CD2BP2, PPIH, SNU13, EFTUD2, SART1 and USP39, plus LSM2, LSM3, LSM4, LSM5, LSM6, LSM7 and LSM8. Component of the U7 snRNP complex, or U7 Sm protein core complex, that is composed of the U7 snRNA and at least LSM10, LSM11, SNRPB, SNRPD3, SNRPE, SNRPF and SNRPG; the complex does not contain SNRPD1 and SNRPD2. Component of the minor spliceosome, which splices U12-type introns. Part of the SMN-Sm complex that contains SMN1, GEMIN2/SIP1, DDX20/GEMIN3, GEMIN4, GEMIN5, GEMIN6, GEMIN7, GEMIN8, STRAP/UNRIP and the Sm proteins SNRPB, SNRPD1, SNRPD2, SNRPD3, SNRPE, SNRPF and SNRPG; catalyzes core snRNPs assembly. Forms a 6S pICln-Sm complex composed of CLNS1A/pICln, SNRPD1, SNRPD2, SNRPE, SNRPF and SNRPG; ring-like structure where CLNS1A/pICln mimics additional Sm proteins and which is unable to assemble into the core snRNP. Interacts with SMN1; the interaction is direct. Interacts with GEMIN2 (via N-terminus); the interaction is direct. Interacts with SNRPF; the interaction is direct. Interacts with SNRPG; the interaction is direct.

The protein localises to the cytoplasm. The protein resides in the cytosol. It is found in the nucleus. Functionally, plays a role in pre-mRNA splicing as a core component of the spliceosomal U1, U2, U4 and U5 small nuclear ribonucleoproteins (snRNPs), the building blocks of the spliceosome. Component of both the pre-catalytic spliceosome B complex and activated spliceosome C complexes. As a component of the minor spliceosome, involved in the splicing of U12-type introns in pre-mRNAs. As part of the U7 snRNP it is involved in histone 3'-end processing. This is Small nuclear ribonucleoprotein E (SNRPE) from Sus scrofa (Pig).